Reading from the N-terminus, the 362-residue chain is Cobalt-precorrin-5B C(1)-methyltransferase (362 aa).

Belongs to the CbiD family.

The enzyme catalyses Co-precorrin-5B + S-adenosyl-L-methionine = Co-precorrin-6A + S-adenosyl-L-homocysteine. It functions in the pathway cofactor biosynthesis; adenosylcobalamin biosynthesis; cob(II)yrinate a,c-diamide from sirohydrochlorin (anaerobic route): step 6/10. Catalyzes the methylation of C-1 in cobalt-precorrin-5B to form cobalt-precorrin-6A. The protein is Cobalt-precorrin-5B C(1)-methyltransferase of Burkholderia vietnamiensis (strain G4 / LMG 22486) (Burkholderia cepacia (strain R1808)).